Here is a 59-residue protein sequence, read N- to C-terminus: Prokaryotic ubiquitin-like protein UBact (59 aa).

A disordered region spans residues 1-59 (MEMTDPLRREEKKESSPDPKEESGPSRPDVSRPGRDSLLKRMKKVDPKQSEKYKQRTGQ). Q59 carries the post-translational modification Deamidated glutamine. An Isoglutamyl lysine isopeptide (Gln-Lys) (interchain with K-? in acceptor proteins) cross-link involves residue Q59.

The protein belongs to the ubiquitin-like protein UBact family. May be modified by deamidation of its C-terminal glutamine to glutamate by the adjacently encoded deamidase. This could be a prerequisite to the subsequent conjugation, as shown in the other prokaryotic ubiquitin-like protein Pup.

In terms of biological role, may function as a protein modifier covalently attached to lysine residues of substrate proteins. This may serve to target the modified proteins for degradation by proteasomes. The protein is Prokaryotic ubiquitin-like protein UBact of Nitrospina gracilis (strain 3/211).